A 1230-amino-acid chain; its full sequence is Myosin-1 (1230 aa).

A disordered region spans residues Met-1–Asp-32. One can recognise a Myosin motor domain in the interval Val-39–Asp-713. Gly-132–Thr-139 lines the ATP pocket. Positions Ser-403–Ala-485 are actin-binding. IQ domains lie at His-717–Ala-737 and Ala-738–Gln-763. Positions Arg-771 to Pro-961 constitute a TH1 domain. Disordered stretches follow at residues Gln-945–Pro-1018, Thr-1033–Lys-1065, and Ala-1116–Trp-1230. Positions Thr-1033–Arg-1045 are enriched in polar residues. 2 stretches are compositionally biased toward pro residues: residues Val-1047–Pro-1062 and Thr-1122–Pro-1142. In terms of domain architecture, SH3 spans Ser-1064–Pro-1123. Residues Arg-1179 to Arg-1214 show a composition bias toward low complexity.

The protein belongs to the TRAFAC class myosin-kinesin ATPase superfamily. Myosin family.

It is found in the cytoplasm. Its subcellular location is the cytoskeleton. It localises to the actin patch. Type-I myosin implicated in the organization of the actin cytoskeleton. Required for proper actin cytoskeleton polarization. At the cell cortex, assembles in patch-like structures together with proteins from the actin-polymerizing machinery and promotes actin assembly. Functions as actin nucleation-promoting factor (NPF) for the Arp2/3 complex. This Sclerotinia sclerotiorum (strain ATCC 18683 / 1980 / Ss-1) (White mold) protein is Myosin-1 (myoA).